We begin with the raw amino-acid sequence, 558 residues long: Formate--tetrahydrofolate ligase (558 aa).

65–72 contacts ATP; the sequence is TPAGEGKT.

Belongs to the formate--tetrahydrofolate ligase family.

The enzyme catalyses (6S)-5,6,7,8-tetrahydrofolate + formate + ATP = (6R)-10-formyltetrahydrofolate + ADP + phosphate. It participates in one-carbon metabolism; tetrahydrofolate interconversion. The chain is Formate--tetrahydrofolate ligase from Methylobacterium sp. (strain 4-46).